The chain runs to 269 residues: Diaminopimelate epimerase (269 aa).

Residues asparagine 13, glutamine 47, and asparagine 65 each contribute to the substrate site. Cysteine 74 functions as the Proton donor in the catalytic mechanism. Residues 75-76, asparagine 149, asparagine 182, and 200-201 each bind substrate; these read GN and ER. The active-site Proton acceptor is the cysteine 209. Residue 210 to 211 participates in substrate binding; sequence GT.

It belongs to the diaminopimelate epimerase family. As to quaternary structure, homodimer.

It is found in the cytoplasm. The catalysed reaction is (2S,6S)-2,6-diaminopimelate = meso-2,6-diaminopimelate. The protein operates within amino-acid biosynthesis; L-lysine biosynthesis via DAP pathway; DL-2,6-diaminopimelate from LL-2,6-diaminopimelate: step 1/1. Catalyzes the stereoinversion of LL-2,6-diaminopimelate (L,L-DAP) to meso-diaminopimelate (meso-DAP), a precursor of L-lysine and an essential component of the bacterial peptidoglycan. The protein is Diaminopimelate epimerase of Erythrobacter litoralis (strain HTCC2594).